Here is a 1084-residue protein sequence, read N- to C-terminus: Cellulose synthase A catalytic subunit 6 [UDP-forming] (1084 aa).

Methionine 1 is modified (N-acetylmethionine). The Cytoplasmic segment spans residues 1–277; that stretch reads MNTGGRLIAG…KSSKINPYRM (277 aa). Residues cysteine 39, cysteine 42, cysteine 58, cysteine 61, cysteine 66, cysteine 69, cysteine 81, and cysteine 84 each coordinate Zn(2+). An RING-type; degenerate zinc finger spans residues 39-85; the sequence is CQICRDEIELTVDGEPFVACNECAFPVCRPCYEYERREGNQACPQCK. Residues 278–298 traverse the membrane as a helical segment; it reads LIVLRLVILGLFFHYRILHPV. Topologically, residues 299 to 300 are extracellular; the sequence is KD. The chain crosses the membrane as a helical span at residues 301-321; the sequence is AYALWLISVICEIWFAVSWVL. The Cytoplasmic segment spans residues 322 to 868; that stretch reads DQFPKWYPIE…INSVVYPWTS (547 aa). Residues serine 360, lysine 366, glutamate 367, and aspartate 396 each contribute to the UDP-alpha-D-glucose site. The active site involves aspartate 396. Residues 450–476 are a coiled coil; the sequence is VRERRAMKRDYEEFKVKINALVATAQK. Lysine 537 is a binding site for UDP-alpha-D-glucose. 2 residues coordinate Mn(2+): lysine 538 and aspartate 562. Residues 675-703 are a coiled coil; the sequence is RKAKTVAADKKKKNREASKQIHALENIEE. The active site involves aspartate 785. The chain crosses the membrane as a helical span at residues 869–889; that stretch reads LPLIVYCSLPAICLLTGKFIV. The Extracellular portion of the chain corresponds to 890 to 894; the sequence is PEISN. A helical membrane pass occupies residues 895–915; that stretch reads YASILFMALFSSIAITGILEM. Residues 916-930 lie on the Cytoplasmic side of the membrane; the sequence is QWGKVGIDDWWRNEQ. A helical transmembrane segment spans residues 931 to 951; sequence FWVIGGVSAHLFALFQGLLKV. Over 952-980 the chain is Extracellular; that stretch reads LAGVDTNFTVTSKAADDGEFSDLYLFKWT. Residue asparagine 958 is glycosylated (N-linked (GlcNAc...) asparagine). The chain crosses the membrane as a helical span at residues 981 to 1001; sequence SLLIPPMTLLIINVIGVIVGV. At 1002 to 1012 the chain is on the cytoplasmic side; the sequence is SDAISNGYDSW. A helical membrane pass occupies residues 1013–1033; the sequence is GPLFGRLFFALWVIIHLYPFL. Topologically, residues 1034-1042 are extracellular; the sequence is KGLLGKQDR. Residues 1043–1063 form a helical membrane-spanning segment; it reads MPTIIVVWSILLASILTLLWV. Topologically, residues 1064–1084 are cytoplasmic; the sequence is RVNPFVAKGGPILEICGLDCL.

This sequence belongs to the glycosyltransferase 2 family. Plant cellulose synthase subfamily. As to quaternary structure, interacts with CESA1 and CESA3. Interacts with STL1 and STL2, but not with GOT1. Binds to CSI1 and CSI3. Interacts with PAT24/TIP1. Zn(2+) is required as a cofactor. It depends on Mn(2+) as a cofactor. In terms of processing, S-acylated. Expressed in germinating seeds, seedlings, roots, stems, leaves and flowers. Not present in mature flowers.

The protein localises to the cell membrane. The enzyme catalyses [(1-&gt;4)-beta-D-glucosyl](n) + UDP-alpha-D-glucose = [(1-&gt;4)-beta-D-glucosyl](n+1) + UDP + H(+). It participates in glycan metabolism; plant cellulose biosynthesis. In terms of biological role, catalytic subunit of cellulose synthase terminal complexes ('rosettes'), required for beta-1,4-glucan microfibril crystallization, a major mechanism of the cell wall formation. Involved in the primary cell wall formation. The presence of each protein CESA1 and CESA6 is critical for cell expansion. The hypocotyl elongation is based on a CESA6-dependent cell elongation in dark and a CESA6-independent cell elongation in light. The transition between these two mechanisms requires photosynthesis and PHYB, but not CRY1. The CESA6-dependent cell elongation seems to be independent of gibberellic acid, auxin and ethylene. May be involved in sensitivity to isoxaben. Associates with and moves along cortical microtubules for the process of cellulose deposition. The protein is Cellulose synthase A catalytic subunit 6 [UDP-forming] of Arabidopsis thaliana (Mouse-ear cress).